We begin with the raw amino-acid sequence, 242 residues long: MDFKILKEKLPQSNLTVVLTGAGISKESGIPTFRGEDGLWKKYNPEELATPWAFQRNPALVWEWYDYRRRIISKAKPNKCHLLIAEFEERFKNVRVITQNVDGLHEAAGSTNVIELHGNIWKVKCTKCDFRGINREVPLSKIPPECPKCGSIVRPDVVWFGEPLPSDKLTEAMELSQRADLFIVIGTSLMVQPAASLPFLALERGAFVVEVSPEETPLSRKAHLFFQMGAVEFAMKFEEKEG.

Residues 1 to 242 (MDFKILKEKL…FAMKFEEKEG (242 aa)) form the Deacetylase sirtuin-type domain. 21 to 40 (GAGISKESGIPTFRGEDGLW) lines the NAD(+) pocket. Residues Tyr65 and Arg68 each coordinate substrate. 99–102 (QNVD) provides a ligand contact to NAD(+). His117 functions as the Proton acceptor in the catalytic mechanism. Zn(2+)-binding residues include Cys125, Cys128, Cys146, and Cys149. NAD(+)-binding positions include 186–188 (GTS) and Glu241.

Belongs to the sirtuin family. Class III subfamily. Zn(2+) is required as a cofactor.

The protein resides in the cytoplasm. The enzyme catalyses N(6)-acetyl-L-lysyl-[protein] + NAD(+) + H2O = 2''-O-acetyl-ADP-D-ribose + nicotinamide + L-lysyl-[protein]. The catalysed reaction is N(6)-succinyl-L-lysyl-[protein] + NAD(+) + H2O = 2''-O-succinyl-ADP-D-ribose + nicotinamide + L-lysyl-[protein]. Functionally, NAD-dependent lysine deacetylase and desuccinylase that specifically removes acetyl and succinyl groups on target proteins. Modulates the activities of several proteins which are inactive in their acylated form. This chain is NAD-dependent protein deacylase 1, found in Caldanaerobacter subterraneus subsp. tengcongensis (strain DSM 15242 / JCM 11007 / NBRC 100824 / MB4) (Thermoanaerobacter tengcongensis).